A 310-amino-acid chain; its full sequence is Olfactory receptor 5P80 (310 aa).

Over 1–25 (MEPGNYTVVTEVILLGFTEDAIIRA) the chain is Extracellular. N-linked (GlcNAc...) asparagine glycosylation is present at asparagine 5. A helical transmembrane segment spans residues 26–46 (ILFIVFLIIYSVTLMGNASII). Residues 47 to 54 (MLIRRSPQ) lie on the Cytoplasmic side of the membrane. Residues 55-75 (LHTPMYLLLSHLAFVDIGYSS) traverse the membrane as a helical segment. Over 76-99 (SVTPIMLKGFLRKETFILVSGCVA) the chain is Extracellular. A disulfide bridge links cysteine 97 with cysteine 189. Residues 100 to 120 (QLCSVVTFGSTECFLLAAMAY) traverse the membrane as a helical segment. The Cytoplasmic portion of the chain corresponds to 121 to 133 (DRYVAICSPLLYA). A helical membrane pass occupies residues 134 to 154 (TQMSSTVCILLVGASYLGGCV). The Extracellular segment spans residues 155-196 (NAWTFTGCLLNLSFCRPNKVNHFFCDYSPLLKISCSHDFSSE). The N-linked (GlcNAc...) asparagine glycan is linked to asparagine 165. A helical membrane pass occupies residues 197 to 217 (VIPAISSGSIIVVTVFIIALS). The Cytoplasmic segment spans residues 218–237 (YVYILVSILKMRSTEGRQKA). A helical membrane pass occupies residues 238–258 (FSTCTSHLTAVTLFYGTITFI). The Extracellular portion of the chain corresponds to 259 to 271 (YVMPKSSYSTDQN). Residues 272–292 (KVVSVFYTVVIPMLNPIIYSL) traverse the membrane as a helical segment. Topologically, residues 293-310 (RNKDVKEAMKKLMANTHH) are cytoplasmic.

This sequence belongs to the G-protein coupled receptor 1 family.

It localises to the cell membrane. Potential odorant receptor. This is Olfactory receptor 5P80 from Mus musculus (Mouse).